The following is a 113-amino-acid chain: U11-theraphotoxin-Hhn1n (113 aa).

The first 21 residues, 1-21 (MNTVRVTFLLVFVLAVSLGQA), serve as a signal peptide directing secretion. Residues 22–74 (DKDENRMEMQEKTEQGKSYLDFAENLLLQKLEELEAKLLEEDSEESRNSRQKR) constitute a propeptide that is removed on maturation. The span at 60–69 (LEEDSEESRN) shows a compositional bias: basic and acidic residues. Residues 60 to 83 (LEEDSEESRNSRQKRCIGEGVPCD) are disordered. Intrachain disulfides connect cysteine 75-cysteine 90 and cysteine 89-cysteine 110.

It belongs to the neurotoxin 14 (magi-1) family. 01 (HNTX-16) subfamily. In terms of tissue distribution, expressed by the venom gland.

It is found in the secreted. In terms of biological role, probable ion channel inhibitor. In Cyriopagopus hainanus (Chinese bird spider), this protein is U11-theraphotoxin-Hhn1n.